The sequence spans 586 residues: Protein translocase subunit SecD (586 aa).

6 consecutive transmembrane segments (helical) span residues 7 to 27 (LILI…TLKW), 418 to 438 (SALA…LSGV), 439 to 459 (VAGF…LSAF), 465 to 485 (LTSI…NIVI), 521 to 541 (TFIA…GFAW), and 546 to 566 (GIVA…EFII).

It belongs to the SecD/SecF family. SecD subfamily. As to quaternary structure, forms a complex with SecF. Part of the essential Sec protein translocation apparatus which comprises SecA, SecYEG and auxiliary proteins SecDF. Other proteins may also be involved.

The protein resides in the cell inner membrane. Part of the Sec protein translocase complex. Interacts with the SecYEG preprotein conducting channel. SecDF uses the proton motive force (PMF) to complete protein translocation after the ATP-dependent function of SecA. The chain is Protein translocase subunit SecD from Borreliella burgdorferi (strain ATCC 35210 / DSM 4680 / CIP 102532 / B31) (Borrelia burgdorferi).